Here is a 239-residue protein sequence, read N- to C-terminus: MAKLGVNIDHVATIRQARGGVEPDPVAAAAIAEFAGADGITVHLREDRRHIQDRDLRLLRQTVKTKLNLEMAATDEMVGIALSVKPDMCTLVPERRQELTTEGGLDVRVGMQALADAIGRLQDGGIVVSLFIDPDADQVKASSKVGADYIEIHTGTFAEAREWKKEQAELERIENAIKLGTKLGLGINAGHGLNYTNVRKVAALGGIEEFNIGHSIISRAVFTGLDRAVRDMVDLVKYA.

Asn-7 contacts 3-amino-2-oxopropyl phosphate. Position 9–10 (9–10 (DH)) interacts with 1-deoxy-D-xylulose 5-phosphate. Arg-18 lines the 3-amino-2-oxopropyl phosphate pocket. His-43 serves as the catalytic Proton acceptor. Residues Arg-45 and His-50 each contribute to the 1-deoxy-D-xylulose 5-phosphate site. Catalysis depends on Glu-70, which acts as the Proton acceptor. Thr-100 is a binding site for 1-deoxy-D-xylulose 5-phosphate. Catalysis depends on His-191, which acts as the Proton donor. 3-amino-2-oxopropyl phosphate-binding positions include Gly-192 and 213 to 214 (GH).

It belongs to the PNP synthase family. As to quaternary structure, homooctamer; tetramer of dimers.

Its subcellular location is the cytoplasm. The enzyme catalyses 3-amino-2-oxopropyl phosphate + 1-deoxy-D-xylulose 5-phosphate = pyridoxine 5'-phosphate + phosphate + 2 H2O + H(+). It functions in the pathway cofactor biosynthesis; pyridoxine 5'-phosphate biosynthesis; pyridoxine 5'-phosphate from D-erythrose 4-phosphate: step 5/5. Functionally, catalyzes the complicated ring closure reaction between the two acyclic compounds 1-deoxy-D-xylulose-5-phosphate (DXP) and 3-amino-2-oxopropyl phosphate (1-amino-acetone-3-phosphate or AAP) to form pyridoxine 5'-phosphate (PNP) and inorganic phosphate. The sequence is that of Pyridoxine 5'-phosphate synthase from Geobacter sulfurreducens (strain ATCC 51573 / DSM 12127 / PCA).